The chain runs to 462 residues: Iroquois-class homeodomain protein irx-1-B (462 aa).

Positions 121–183 form a DNA-binding region, homeobox; TALE-type; that stretch reads DPGRPKNATR…NARRRLKKEN (63 aa). Disordered regions lie at residues 191–302, 314–339, and 405–462; these read GKED…PHSK, SPDGALKSSPPPSQANHTSPQMQHPA, and SLSS…LPSA. 2 stretches are compositionally biased toward acidic residues: residues 210-220 and 228-239; these read EDDEEIDLESI and NDGEQSNEEEDE. Residues 240–257 are compositionally biased toward basic and acidic residues; sequence KLDHFRHGEKVSLKKESE. A compositionally biased stretch (basic and acidic residues) spans 410 to 426; it reads RTPERTSPKHSDRENLP. Residues 446-455 show a composition bias toward polar residues; that stretch reads FSQQEGTSRI.

This sequence belongs to the TALE/IRO homeobox family.

It is found in the nucleus. Acts partially redundantly with other irx members in neural patterning. Required for formation of the posterior forebrain, midbrain, hindbrain, and to a lesser extent, spinal cord. Acts early in neural plate development to induce expression of some but not all proneural genes, and specify a neural precursor state. Also up-regulates repressors that prevent neuronal differentiation. Patterns the neuroectoderm in both the anterior/posterior and dorsal/ventral axes. Acts primarily as a transcriptional repressor during neural development, and binds to the bmp4 promoter to repress gene expression and thus mediate down-regulation of bmp4 by wnt signaling. Controls multiple processes through bmp4-repression including neural plate development, neural crest specification and Spemann organizer development. Involved in the specification of the preplacodal field at the anterior border of the neural plate. Regulates the genetic cascade of interactions that are necessary for positioning the isthmus organizer and the formation of the midbrain-hindbrain boundary. Required during at least two stages of pronephros kidney development; during neurula stages, maintains transcription of key renal genes to define the size and identity of the pronephric anlage, probably in part through regulation of bmp-signaling. Subsequently required for proper formation of the intermediate tubule segment of the pronephros. Acts principally as a transcriptional activator during pronephros development. This is Iroquois-class homeodomain protein irx-1-B (irx1-b) from Xenopus laevis (African clawed frog).